Consider the following 546-residue polypeptide: Probable protein kinase UbiB (546 aa).

Positions 124-502 (DFDIQPLASA…HVRQSQSRYL (379 aa)) constitute a Protein kinase domain. Residues 130–138 (LASASIAQV) and Lys153 contribute to the ATP site. Asp288 serves as the catalytic Proton acceptor. Helical transmembrane passes span 501 to 521 (YLLG…VNRP) and 522 to 542 (EWGL…LVGW).

This sequence belongs to the ABC1 family. UbiB subfamily.

The protein localises to the cell inner membrane. It functions in the pathway cofactor biosynthesis; ubiquinone biosynthesis [regulation]. Its function is as follows. Is probably a protein kinase regulator of UbiI activity which is involved in aerobic coenzyme Q (ubiquinone) biosynthesis. The sequence is that of Probable protein kinase UbiB from Salmonella agona (strain SL483).